The chain runs to 364 residues: tRNA (adenine(58)-N(1))-methyltransferase catalytic subunit trm61 (364 aa).

S-adenosyl-L-methionine is bound by residues 114–116 (SAS), E135, R140, 167–168 (DV), and D186. The interval 280-309 (EQNLSSDAKVEDQDNDSMLGENKSSVSTET) is disordered.

This sequence belongs to the class I-like SAM-binding methyltransferase superfamily. TRM61 family. In terms of assembly, heterotetramer; composed of two copies of TRM6 and two copies of TRM61.

The protein resides in the nucleus. The enzyme catalyses adenosine(58) in tRNA + S-adenosyl-L-methionine = N(1)-methyladenosine(58) in tRNA + S-adenosyl-L-homocysteine + H(+). In terms of biological role, catalytic subunit of tRNA (adenine-N(1)-)-methyltransferase, which catalyzes the formation of N(1)-methyladenine at position 58 (m1A58) in initiator methionyl-tRNA. This is tRNA (adenine(58)-N(1))-methyltransferase catalytic subunit trm61 (cpd1) from Schizosaccharomyces pombe (strain 972 / ATCC 24843) (Fission yeast).